The following is a 37-amino-acid chain: Potassium channel toxin alpha-KTx 3.13 (37 aa).

Intrachain disulfides connect cysteine 7–cysteine 27, cysteine 13–cysteine 32, and cysteine 17–cysteine 34. Lysine amide is present on lysine 37.

This sequence belongs to the short scorpion toxin superfamily. Potassium channel inhibitor family. Alpha-KTx 03 subfamily. As to expression, expressed by the venom gland.

The protein localises to the secreted. In terms of biological role, blocks voltage-gated potassium channels Kv1.1/KCNA1 (IC(50)=203.15 pM), Kv1.2/KCNA2 (IC(50)=8.92 nM) from rat and human Kv1.3 KCNA3/KCNA3 (IC(50)=171 pM) potently. At 2 uM, also blocks Shaker IR and has a moderate effect on rat Kv1.6/KCNA6. This Mesobuthus eupeus (Lesser Asian scorpion) protein is Potassium channel toxin alpha-KTx 3.13.